Here is a 219-residue protein sequence, read N- to C-terminus: Protein-L-isoaspartate O-methyltransferase (219 aa).

Serine 60 is a catalytic residue.

It belongs to the methyltransferase superfamily. L-isoaspartyl/D-aspartyl protein methyltransferase family.

The protein resides in the cytoplasm. The enzyme catalyses [protein]-L-isoaspartate + S-adenosyl-L-methionine = [protein]-L-isoaspartate alpha-methyl ester + S-adenosyl-L-homocysteine. Its function is as follows. Catalyzes the methyl esterification of L-isoaspartyl residues in peptides and proteins that result from spontaneous decomposition of normal L-aspartyl and L-asparaginyl residues. It plays a role in the repair and/or degradation of damaged proteins. The chain is Protein-L-isoaspartate O-methyltransferase from Rhodospirillum rubrum (strain ATCC 11170 / ATH 1.1.1 / DSM 467 / LMG 4362 / NCIMB 8255 / S1).